The chain runs to 296 residues: Nucleotide-binding protein Pnec_1620 (296 aa).

8–15 contributes to the ATP binding site; sequence GISGSGKS. 57–60 is a binding site for GTP; that stretch reads DARR.

The protein belongs to the RapZ-like family.

In terms of biological role, displays ATPase and GTPase activities. The polypeptide is Nucleotide-binding protein Pnec_1620 (Polynucleobacter necessarius subsp. necessarius (strain STIR1)).